Here is a 441-residue protein sequence, read N- to C-terminus: MANNNVYSVLKSLLLLLHLVFLSKQHVDSASIVKFLPGFEGPLPFELETGYIGVGEEEEVQLFYYFIKSERNPKEDPLLLWLTGGPGCSAISGLLYQNGPLAMKLDVYNGTLPSLVSTTYSWTKTSSMIFLDQPVGTGFSYSRTQLFNKPSDTGEAKRIHEFLQKWLGKHQEFSSNPFYVGGDSYSGLVVPATVQEISKGNCQCCNRPINLQGYVLGNPLTDCVYDCNYRVPFAHKMALISDELYESLKRTCRGEYVNVHPHDTECLKFVEEFNKLTNRVCERHILHSCCETETPSCYSYRFMLTTYWANDETVRKALQINKESIGEWTRCYRGIPYNHDIKSSVPYHMNNSIDGYRSLIYSGDHDIQVPFLGTQAWIRSLNYSIIDDWRPWMIKDQIAGYTTSYVNKMTFATVTGGGHTAEFTPKETFMMFQRWINGQPL.

The first 29 residues, 1–29 (MANNNVYSVLKSLLLLLHLVFLSKQHVDS), serve as a signal peptide directing secretion. 3 disulfide bridges follow: Cys-88–Cys-331, Cys-252–Cys-266, and Cys-290–Cys-297. N-linked (GlcNAc...) asparagine glycosylation is present at Asn-109. Residue Ser-184 is part of the active site. A glycan (N-linked (GlcNAc...) asparagine) is linked at Asn-350. The active site involves Asp-366. A glycan (N-linked (GlcNAc...) asparagine) is linked at Asn-382. His-419 is a catalytic residue.

Belongs to the peptidase S10 family. In terms of tissue distribution, ubiquitous.

The protein localises to the secreted. Functionally, probable carboxypeptidase. This chain is Serine carboxypeptidase-like 4 (SCPL4), found in Arabidopsis thaliana (Mouse-ear cress).